The following is a 238-amino-acid chain: Ribitol-5-phosphate cytidylyltransferase (238 aa).

CTP is bound by residues 7–10 and 81–87; these read LAGG and GSDRNET.

This sequence belongs to the IspD/TarI cytidylyltransferase family. TarI subfamily.

The enzyme catalyses D-ribitol 5-phosphate + CTP + H(+) = CDP-L-ribitol + diphosphate. It participates in cell wall biogenesis; poly(ribitol phosphate) teichoic acid biosynthesis. Functionally, catalyzes the transfer of the cytidylyl group of CTP to D-ribitol 5-phosphate. In Staphylococcus saprophyticus subsp. saprophyticus (strain ATCC 15305 / DSM 20229 / NCIMB 8711 / NCTC 7292 / S-41), this protein is Ribitol-5-phosphate cytidylyltransferase.